Here is a 410-residue protein sequence, read N- to C-terminus: O-methyltransferase afvC (410 aa).

Residues 253-254 (GG), D278, 299-300 (DF), and R315 each bind S-adenosyl-L-methionine. Residue H319 is the Proton acceptor of the active site.

It belongs to the class I-like SAM-binding methyltransferase superfamily. Cation-independent O-methyltransferase family. COMT subfamily.

It functions in the pathway secondary metabolite biosynthesis. Its function is as follows. O-methyltransferase; part of the gene cluster that mediates the biosynthesis of aflavarin, a bicoumarin that exhibits anti-insectan activity against the fungivorous beetle C.hemipterus. This Aspergillus flavus (strain ATCC 200026 / FGSC A1120 / IAM 13836 / NRRL 3357 / JCM 12722 / SRRC 167) protein is O-methyltransferase afvC.